A 513-amino-acid chain; its full sequence is Activin receptor type-2A (513 aa).

The first 19 residues, 1-19 (MGAAAKLAFAVFLISCSSG), serve as a signal peptide directing secretion. Residues 20–135 (AILGRSETQE…TSNPVTPKPP (116 aa)) are Extracellular-facing. Cystine bridges form between Cys30-Cys60, Cys50-Cys78, Cys85-Cys104, Cys91-Cys103, and Cys105-Cys110. N-linked (GlcNAc...) asparagine glycans are attached at residues Asn43 and Asn66. Residues 136–161 (YYNILLYSLVPLMLIAGIVICAFWVY) traverse the membrane as a helical segment. Residues 162–513 (RHHKMAYPPV…VDFPPKESSL (352 aa)) lie on the Cytoplasmic side of the membrane. Residues 192 to 485 (LQLLEVKARG…GERITQMQRL (294 aa)) form the Protein kinase domain. ATP is bound by residues 198 to 206 (KARGRFGCV) and Lys219. Asp322 acts as the Proton acceptor in catalysis.

Belongs to the protein kinase superfamily. TKL Ser/Thr protein kinase family. TGFB receptor subfamily. Part of a complex consisting of MAGI2/ARIP1, ACVR2A, ACVR1B and SMAD3. Interacts with MAGI2/ARIP1. Interacts with type I receptor ACVR1. Interacts with BMP7. Interacts with TSC22D1/TSC-22. Interacts with activin A/INHBA. Requires Mg(2+) as cofactor. Mn(2+) is required as a cofactor. As to expression, brain, testis, intestine, liver and kidney.

The protein resides in the cell membrane. It carries out the reaction L-threonyl-[receptor-protein] + ATP = O-phospho-L-threonyl-[receptor-protein] + ADP + H(+). The enzyme catalyses L-seryl-[receptor-protein] + ATP = O-phospho-L-seryl-[receptor-protein] + ADP + H(+). On ligand binding, forms a receptor complex consisting of two type II and two type I transmembrane serine/threonine kinases. Type II receptors phosphorylate and activate type I receptors which autophosphorylate, then bind and activate SMAD transcriptional regulators. Receptor for activin A, activin B and inhibin A. Mediates induction of adipogenesis by GDF6. The polypeptide is Activin receptor type-2A (Mus musculus (Mouse)).